The chain runs to 23 residues: Conotoxin Cl6c (23 aa).

3 disulfides stabilise this stretch: C2/C12, C5/C17, and C11/C21.

As to expression, expressed by the venom duct.

The protein resides in the secreted. This is Conotoxin Cl6c from Californiconus californicus (California cone).